The following is a 250-amino-acid chain: MNVRRVESISAQLEEASSTGGFLYTQNSTKRSIKERLMKLLPCSAAKTSSPAVQNSVEDELEMATVRHRPEALELLEAQSKFTKKELQILYRGFKNECPSGVVNEDTFKEIYSQFFPQGDSTTYAHFLFNAFDTDHNGAVSFEDFIKGLSILLRGTVQEKLNWAFNLYDINKDGYITKEEMLDIMKAIYDMMGKCTYPVLKEDAPRQHVETFFQKMDKNKDGVVTIDEFIESCQKDENIMRSMQLFENVI.

Residues 2 to 44 (NVRRVESISAQLEEASSTGGFLYTQNSTKRSIKERLMKLLPCS) form a KIS region. Residues S17 and S56 each carry the phosphoserine modification. The EF-hand 1; degenerate domain maps to 61-117 (LEMATVRHRPEALELLEAQSKFTKKELQILYRGFKNECPSGVVNEDTFKEIYSQFFP). EF-hand domains lie at 120–155 (DSTTYAHFLFNAFDTDHNGAVSFEDFIKGLSILLRG), 156–191 (TVQEKLNWAFNLYDINKDGYITKEEMLDIMKAIYDM), and 204–239 (APRQHVETFFQKMDKNKDGVVTIDEFIESCQKDENI). Residues D133, D135, N137, D144, D169, N171, D173, Y175, E180, D217, N219, D221, and E228 each coordinate Ca(2+). Residues 237–250 (ENIMRSMQLFENVI) are interaction with KCND2.

The protein belongs to the recoverin family. As to quaternary structure, component of heteromultimeric potassium channels. Identified in potassium channel complexes containing KCND1, KCND2, KCND3, KCNIP1, KCNIP2, KCNIP3, KCNIP4, DPP6 and DPP10. Interacts with KCND2. Interacts with KCND3. Interacts with the C-terminus of PSEN2 and probably PSEN1.

The protein localises to the cell membrane. It is found in the cytoplasm. It localises to the peroxisome. In terms of biological role, regulatory subunit of Kv4/D (Shal)-type voltage-gated rapidly inactivating A-type potassium channels. Modulates KCND2 channel density, inactivation kinetics and rate of recovery from inactivation in a calcium-dependent and isoform-specific manner. Modulates KCND3/Kv4.3 currents. Isoform 4 does not increase KCND2 expression at the cell membrane. Isoform 4 retains KCND3 in the endoplasmic reticulum and negatively regulates its expression at the cell membrane. The chain is Kv channel-interacting protein 4 (KCNIP4) from Bos taurus (Bovine).